Here is a 54-residue protein sequence, read N- to C-terminus: Large ribosomal subunit protein bL32c (54 aa).

Belongs to the bacterial ribosomal protein bL32 family.

It localises to the plastid. It is found in the chloroplast. The polypeptide is Large ribosomal subunit protein bL32c (Piper cenocladum (Ant piper)).